A 251-amino-acid polypeptide reads, in one-letter code: Extracellular superoxide dismutase [Cu-Zn] (251 aa).

The first 15 residues, 1–15, serve as a signal peptide directing secretion; the sequence is MLAFLFYGLLLAACG. The propeptide occupies 16–24; sequence SVTMSNPGE. Intrachain disulfides connect C77/C222 and C139/C221. N-linked (GlcNAc...) asparagine glycosylation occurs at N121. The Cu cation site is built by H128, H130, and H145. Zn(2+) is bound by residues H145, H153, H156, and D159. H195 provides a ligand contact to Cu cation. Positions 230–251 are disordered; the sequence is AAWESQTKERKKRRRESECKTT.

It belongs to the Cu-Zn superoxide dismutase family. Homotetramer. Directly interacts with ATP7A/MNK; this interaction is copper-dependent and is required for SOD3 activity. The cofactor is Cu cation. Requires Zn(2+) as cofactor.

The protein resides in the secreted. Its subcellular location is the extracellular space. It is found in the golgi apparatus. The protein localises to the trans-Golgi network. The catalysed reaction is 2 superoxide + 2 H(+) = H2O2 + O2. Functionally, protect the extracellular space from toxic effect of reactive oxygen intermediates by converting superoxide radicals into hydrogen peroxide and oxygen. This Mus musculus (Mouse) protein is Extracellular superoxide dismutase [Cu-Zn] (Sod3).